The sequence spans 231 residues: 5'-methylthioadenosine/S-adenosylhomocysteine nucleosidase (231 aa).

The active-site Proton acceptor is glutamate 12. Substrate is bound by residues glycine 78, methionine 153, and 174–175 (ME). Aspartate 198 (proton donor) is an active-site residue.

This sequence belongs to the PNP/UDP phosphorylase family. MtnN subfamily.

It catalyses the reaction S-adenosyl-L-homocysteine + H2O = S-(5-deoxy-D-ribos-5-yl)-L-homocysteine + adenine. The enzyme catalyses S-methyl-5'-thioadenosine + H2O = 5-(methylsulfanyl)-D-ribose + adenine. The catalysed reaction is 5'-deoxyadenosine + H2O = 5-deoxy-D-ribose + adenine. The protein operates within amino-acid biosynthesis; L-methionine biosynthesis via salvage pathway; S-methyl-5-thio-alpha-D-ribose 1-phosphate from S-methyl-5'-thioadenosine (hydrolase route): step 1/2. Catalyzes the irreversible cleavage of the glycosidic bond in both 5'-methylthioadenosine (MTA) and S-adenosylhomocysteine (SAH/AdoHcy) to adenine and the corresponding thioribose, 5'-methylthioribose and S-ribosylhomocysteine, respectively. Also cleaves 5'-deoxyadenosine, a toxic by-product of radical S-adenosylmethionine (SAM) enzymes, into 5-deoxyribose and adenine. The polypeptide is 5'-methylthioadenosine/S-adenosylhomocysteine nucleosidase (Bacillus thuringiensis subsp. konkukian (strain 97-27)).